Here is a 153-residue protein sequence, read N- to C-terminus: Large ribosomal subunit protein uL13 (153 aa).

The disordered stretch occupies residues 134–153 (EAQQPQALDVGSLNRKNVSA).

It belongs to the universal ribosomal protein uL13 family. Part of the 50S ribosomal subunit.

Its function is as follows. This protein is one of the early assembly proteins of the 50S ribosomal subunit, although it is not seen to bind rRNA by itself. It is important during the early stages of 50S assembly. The polypeptide is Large ribosomal subunit protein uL13 (Methylorubrum extorquens (strain CM4 / NCIMB 13688) (Methylobacterium extorquens)).